The following is a 518-amino-acid chain: Sodium-dependent glucose transporter 1 (518 aa).

The next 12 helical transmembrane spans lie at 19 to 39 (TFQD…FIFV), 53 to 73 (GFLV…SATT), 82 to 102 (CKTA…IGIL), 107 to 127 (NVLI…ALHF), 139 to 159 (LAKL…SDFH), 221 to 241 (FRRA…FFFY), 307 to 327 (TSSL…IATS), 347 to 367 (YTTI…LGEM), 376 to 396 (LQGK…ASIA), 400 to 420 (LFPV…KEDR), 438 to 458 (EEEN…EMIE), and 466 to 486 (SIIE…YNQY). The segment covering 414-426 (RQRKEDRKSEDQK) has biased composition (basic and acidic residues). Residues 414–448 (RQRKEDRKSEDQKALLSSSGLNEYEEENEEEDAEK) form a disordered region. A compositionally biased stretch (acidic residues) spans 436-448 (EYEEENEEEDAEK).

Belongs to the major facilitator superfamily.

Its subcellular location is the apical cell membrane. Its function is as follows. May function as a sodium-dependent glucose transporter. Potential channels for urea in the inner medulla of kidney. This chain is Sodium-dependent glucose transporter 1, found in Homo sapiens (Human).